Consider the following 215-residue polypeptide: Fibroblast growth factor 17 (215 aa).

The first 22 residues, 1–22 (MYGINQRYLYISFHFFVVWCHA), serve as a signal peptide directing secretion. Residue asparagine 137 is glycosylated (N-linked (GlcNAc...) asparagine).

This sequence belongs to the heparin-binding growth factors family.

Its subcellular location is the secreted. Functionally, involved in dorsal-ventral embryonic patterning, by promoting expression of bone morphogenetic protein (BMP) antagonists such as chd. Also involved in anterior-posterior neural patterning and in mesoderm induction. In Danio rerio (Zebrafish), this protein is Fibroblast growth factor 17 (fgf17).